Reading from the N-terminus, the 374-residue chain is UPF0754 membrane protein SAS1767 (374 aa).

2 consecutive transmembrane segments (helical) span residues 4–24 (LFII…TNVI) and 354–374 (SLGF…AIFV).

It belongs to the UPF0754 family.

It is found in the cell membrane. The chain is UPF0754 membrane protein SAS1767 from Staphylococcus aureus (strain MSSA476).